Reading from the N-terminus, the 773-residue chain is Beta-hexosaminidase B (773 aa).

A signal peptide spans 1 to 19; that stretch reads MKFNRLMALLFGVSSPLYA. Cystine bridges form between Cys-46–Cys-53, Cys-389–Cys-397, and Cys-496–Cys-542. Glu-531 functions as the Proton donor in the catalytic mechanism.

The protein belongs to the glycosyl hydrolase 20 family.

It catalyses the reaction Hydrolysis of terminal non-reducing N-acetyl-D-hexosamine residues in N-acetyl-beta-D-hexosaminides.. In Pseudoalteromonas piscicida, this protein is Beta-hexosaminidase B (nag096).